Reading from the N-terminus, the 559-residue chain is PHD finger protein 1 (559 aa).

The 58-residue stretch at 29 to 86 (PRLWEGQDVLARWTDGLLYLGTIKKVDSAREVCLVQFEDDSQFLVLWKDISPAALPGE) folds into the Tudor domain. PHD-type zinc fingers lie at residues 87 to 142 (ELLC…CVFA) and 186 to 240 (QSYC…CRGG). 2 disordered regions span residues 338 to 434 (PVEL…TDAR) and 448 to 526 (HPSA…GGVS). Residues 369–386 (WRSEPEPLRRRQKGKVEE) are compositionally biased toward basic and acidic residues. Composition is skewed to polar residues over residues 417–426 (NQSYEGSSGY) and 449–459 (PSASTAGTSGD). Positions 481–515 (SSPHSVTASSSSVPALTPGFSRHSPPSPLCRSLSP) are enriched in low complexity.

This sequence belongs to the Polycomblike family. In terms of assembly, associated component of the PRC2 complex. Interacts with p53/TP53. Interacts with CHMP1. Testis-specific.

It localises to the nucleus. The protein resides in the cytoplasm. It is found in the cytoskeleton. Its subcellular location is the microtubule organizing center. The protein localises to the centrosome. Functionally, polycomb group (PcG) that specifically binds histone H3 trimethylated at 'Lys-36' (H3K36me3) and recruits the PRC2 complex. Involved in DNA damage response and is recruited at double-strand breaks (DSBs). Acts by binding to H3K36me3, a mark for transcriptional activation, and recruiting the PRC2 complex: it is however unclear whether recruitment of the PRC2 complex to H3K36me3 leads to enhance or inhibit H3K27me3 methylation mediated by the PRC2 complex. According to some reports, PRC2 recruitment by PHF1 promotes H3K27me3 and subsequent gene silencing by inducing spreading of PRC2 and H3K27me3 into H3K36me3 loci. According to other reports, PHF1 recruits the PRC2 complex at double-strand breaks (DSBs) and inhibits the activity of PRC2. Regulates p53/TP53 stability and prolonges its turnover: may act by specifically binding to a methylated from of p53/TP53. The polypeptide is PHD finger protein 1 (Phf1) (Mus musculus (Mouse)).